A 545-amino-acid chain; its full sequence is Phenylalanine--tRNA ligase beta subunit (545 aa).

In terms of domain architecture, B5 spans 268–343 (FLHKIQNVRE…MSIGYNNLEP (76 aa)). Mg(2+) contacts are provided by D321, D327, E330, and D331.

This sequence belongs to the phenylalanyl-tRNA synthetase beta subunit family. Type 2 subfamily. In terms of assembly, tetramer of two alpha and two beta subunits. Requires Mg(2+) as cofactor.

It is found in the cytoplasm. The catalysed reaction is tRNA(Phe) + L-phenylalanine + ATP = L-phenylalanyl-tRNA(Phe) + AMP + diphosphate + H(+). The sequence is that of Phenylalanine--tRNA ligase beta subunit from Saccharolobus islandicus (strain M.16.27) (Sulfolobus islandicus).